The chain runs to 126 residues: Anti-adapter protein IraD (126 aa).

This sequence belongs to the GpW/Gp25 family. IraD subfamily. Interacts with RssB.

The protein resides in the cytoplasm. Its function is as follows. Inhibits RpoS proteolysis by regulating RssB activity, thereby increasing the stability of the sigma stress factor RpoS during oxidative stress. Its effect on RpoS stability is due to its interaction with RssB, which probably blocks the interaction of RssB with RpoS, and the consequent delivery of the RssB-RpoS complex to the ClpXP protein degradation pathway. In Salmonella enteritidis PT4 (strain P125109), this protein is Anti-adapter protein IraD.